An 803-amino-acid polypeptide reads, in one-letter code: Leucine--tRNA ligase (803 aa).

The 'HIGH' region signature appears at 40–51 (PYPSGAGLHVGH). The 'KMSKS' region signature appears at 575 to 579 (KMSKS). Lys578 contacts ATP.

This sequence belongs to the class-I aminoacyl-tRNA synthetase family.

It is found in the cytoplasm. The catalysed reaction is tRNA(Leu) + L-leucine + ATP = L-leucyl-tRNA(Leu) + AMP + diphosphate. This is Leucine--tRNA ligase from Listeria innocua serovar 6a (strain ATCC BAA-680 / CLIP 11262).